The following is a 1466-amino-acid chain: MMSFVQKGSWLLLALLHPTIILAQQEAVEGGCSHLGQSYADRDVWKPEPCQICVCDSGSVLCDDIICDDQELDCPNPEIPFGECCAVCPQPPTAPTRPPNGQGPQGPKGDPGPPGIPGRNGDPGIPGQPGSPGSPGPPGICESCPTGPQNYSPQYDSYDVKSGVAVGGLAGYPGPAGPPGPPGPPGTSGHPGSPGSPGYQGPPGEPGQAGPSGPPGPPGAIGPSGPAGKDGESGRPGRPGERGLPGPPGIKGPAGIPGFPGMKGHRGFDGRNGEKGETGAPGLKGENGLPGENGAPGPMGPRGAPGERGRPGLPGAAGARGNDGARGSDGQPGPPGPPGTAGFPGSPGAKGEVGPAGSPGSNGAPGQRGEPGPQGHAGAQGPPGPPGINGSPGGKGEMGPAGIPGAPGLMGARGPPGPAGANGAPGLRGGAGEPGKNGAKGEPGPRGERGEAGIPGVPGAKGEDGKDGSPGEPGANGLPGAAGERGAPGFRGPAGPNGIPGEKGPAGERGAPGPAGPRGAAGEPGRDGVPGGPGMRGMPGSPGGPGSDGKPGPPGSQGESGRPGPPGPSGPRGQPGVMGFPGPKGNDGAPGKNGERGGPGGPGPQGPPGKNGETGPQGPPGPTGPGGDKGDTGPPGPQGLQGLPGTGGPPGENGKPGEPGPKGDAGAPGAPGGKGDAGAPGERGPPGLAGAPGLRGGAGPPGPEGGKGAAGPPGPPGAAGTPGLQGMPGERGGLGSPGPKGDKGEPGGPGADGVPGKDGPRGPTGPIGPPGPAGQPGDKGEGGAPGLPGIAGPRGSPGERGETGPPGPAGFPGAPGQNGEPGGKGERGAPGEKGEGGPPGVAGPPGGSGPAGPPGPQGVKGERGSPGGPGAAGFPGARGLPGPPGSNGNPGPPGPSGSPGKDGPPGPAGNTGAPGSPGVSGPKGDAGQPGEKGSPGAQGPPGAPGPLGIAGITGARGLAGPPGMPGPRGSPGPQGVKGESGKPGANGLSGERGPPGPQGLPGLAGTAGEPGRDGNPGSDGLPGRDGSPGGKGDRGENGSPGAPGAPGHPGPPGPVGPAGKSGDRGESGPAGPAGAPGPAGSRGAPGPQGPRGDKGETGERGAAGIKGHRGFPGNPGAPGSPGPAGQQGAIGSPGPAGPRGPVGPSGPPGKDGTSGHPGPIGPPGPRGNRGERGSEGSPGHPGQPGPPGPPGAPGPCCGGVGAAAIAGIGGEKAGGFAPYYGDEPMDFKINTDEIMTSLKSVNGQIESLISPDGSRKNPARNCRDLKFCHPELKSGEYWVDPNQGCKLDAIKVFCNMETGETCISANPLNVPRKHWWTDSSAEKKHVWFGESMDGGFQFSYGNPELPEDVLDVHLAFLRLLSSRASQNITYHCKNSIAYMDQASGNVKKALKLMGSNEGEFKAEGNSKFTYTVLEDGCTKHTGEWSKTVFEYRTRKAVRLPIVDIAPYDIGGPDQEFGVDVGPVCFL.

The N-terminal stretch at 1-23 is a signal peptide; it reads MMSFVQKGSWLLLALLHPTIILA. Positions 24 to 153 are cleaved as a propeptide — N-terminal propeptide; the sequence is QQEAVEGGCS…CPTGPQNYSP (130 aa). One can recognise a VWFC domain in the interval 30–89; sequence GGCSHLGQSYADRDVWKPEPCQICVCDSGSVLCDDIICDDQELDCPNPEIPFGECCAVCP. The interval 95-1194 is disordered; sequence PTRPPNGQGP…GPPGPPGAPG (1100 aa). A compositionally biased stretch (low complexity) spans 99–108; sequence PNGQGPQGPK. The span at 146 to 155 shows a compositional bias: polar residues; it reads TGPQNYSPQY. Residues 149–167 are nonhelical region (N-terminal); that stretch reads QNYSPQYDSYDVKSGVAVG. Residues 168 to 1196 are triple-helical region; that stretch reads GLAGYPGPAG…PGPPGAPGPC (1029 aa). 17 positions are modified to 4-hydroxyproline: Pro-173, Pro-179, Pro-182, Pro-185, Pro-191, Pro-194, Pro-197, Pro-203, Pro-206, Pro-215, Pro-218, Pro-236, Pro-239, Pro-245, Pro-248, Pro-257, and Pro-260. Pro residues predominate over residues 175 to 185; it reads PAGPPGPPGPP. A compositionally biased stretch (low complexity) spans 187–199; it reads TSGHPGSPGSPGY. The segment covering 229–241 has biased composition (basic and acidic residues); sequence KDGESGRPGRPGE. A compositionally biased stretch (low complexity) spans 251 to 260; that stretch reads KGPAGIPGFP. Lys-263 is modified (5-hydroxylysine; alternate). Lys-263 carries O-linked (Gal...) hydroxylysine; alternate glycosylation. The span at 266–277 shows a compositional bias: basic and acidic residues; that stretch reads RGFDGRNGEKGE. Position 281 is a 4-hydroxyproline (Pro-281). At Lys-284 the chain carries 5-hydroxylysine. 4-hydroxyproline is present on residues Pro-290, Pro-296, Pro-305, Pro-311, Pro-314, Pro-332, Pro-335, Pro-338, Pro-344, Pro-347, Pro-359, Pro-365, Pro-371, Pro-383, Pro-386, Pro-392, Pro-404, Pro-407, Pro-416, Pro-425, Pro-434, Pro-443, Pro-455, Pro-458, Pro-470, Pro-473, Pro-479, Pro-488, Pro-500, Pro-512, Pro-524, Pro-530, Pro-533, Pro-539, Pro-542, Pro-545, Pro-551, Pro-554, Pro-563, Pro-566, Pro-575, Pro-581, Pro-590, Pro-599, Pro-602, Pro-608, Pro-620, Pro-635, Pro-644, Pro-650, Pro-656, Pro-659, Pro-661, Pro-668, Pro-671, Pro-680, Pro-686, Pro-692, Pro-701, Pro-703, Pro-713, Pro-716, Pro-722, Pro-728, Pro-737, Pro-746, Pro-749, Pro-755, Pro-770, Pro-776, Pro-785, Pro-788, Pro-797, Pro-806, Pro-812, Pro-815, Pro-821, Pro-830, Pro-839, Pro-845, and Pro-854. A compositionally biased stretch (low complexity) spans 311 to 322; that stretch reads PGLPGAAGARGN. Positions 355-380 are enriched in low complexity; the sequence is PAGSPGSNGAPGQRGEPGPQGHAGAQ. Residues 390-399 are compositionally biased toward gly residues; sequence GSPGGKGEMG. Residues 404-425 are compositionally biased toward low complexity; the sequence is PGAPGLMGARGPPGPAGANGAP. A compositionally biased stretch (gly residues) spans 426 to 435; sequence GLRGGAGEPG. Over residues 478-523 the composition is skewed to low complexity; sequence LPGAAGERGAPGFRGPAGPNGIPGEKGPAGERGAPGPAGPRGAAGE. Residues 528–549 show a composition bias toward gly residues; sequence GVPGGPGMRGMPGSPGGPGSDG. Residues 642–651 are compositionally biased toward gly residues; that stretch reads GLPGTGGPPG. Residues 669–678 show a composition bias toward gly residues; sequence GAPGGKGDAG. A compositionally biased stretch (low complexity) spans 679–692; sequence APGERGPPGLAGAP. Residues 693-711 show a composition bias toward gly residues; it reads GLRGGAGPPGPEGGKGAAG. The segment covering 729 to 738 has biased composition (gly residues); the sequence is GERGGLGSPG. A compositionally biased stretch (low complexity) spans 787 to 796; sequence LPGIAGPRGS. Residues 823 to 835 show a composition bias toward basic and acidic residues; the sequence is GKGERGAPGEKGE. A compositionally biased stretch (gly residues) spans 836-850; sequence GGPPGVAGPPGGSGP. Lys-860 carries the post-translational modification 5-hydroxylysine. A compositionally biased stretch (gly residues) spans 864 to 873; sequence GSPGGPGAAG. A 4-hydroxyproline mark is found at Pro-866, Pro-869, Pro-875, Pro-881, Pro-884, Pro-890, Pro-892, Pro-899, Pro-905, Pro-914, Pro-917, Pro-929, Pro-935, Pro-941, and Pro-944. Over residues 890 to 907 the composition is skewed to pro residues; it reads PGPPGPSGSPGKDGPPGP. Over residues 908–917 the composition is skewed to low complexity; it reads AGNTGAPGSP. The span at 946–961 shows a compositional bias: low complexity; it reads PLGIAGITGARGLAGP. 3 positions are modified to 4-hydroxyproline: Pro-962, Pro-965, and Pro-971. A 5-hydroxylysine modification is found at Lys-977. A 4-hydroxyproline mark is found at Pro-983, Pro-995, Pro-1001, Pro-1010, Pro-1016, Pro-1022, Pro-1028, Pro-1040, Pro-1043, Pro-1046, Pro-1049, Pro-1052, Pro-1076, and Pro-1085. Over residues 1046 to 1055 the composition is skewed to pro residues; sequence PGHPGPPGPV. Low complexity predominate over residues 1067–1085; that stretch reads SGPAGPAGAPGPAGSRGAP. At Lys-1106 the chain carries 5-hydroxylysine. 4-hydroxyproline occurs at positions 1112, 1115, 1118, 1121, 1133, 1148, 1157, 1163, 1178, 1181, 1184, 1187, 1190, and 1193. Over residues 1123-1133 the composition is skewed to low complexity; the sequence is PAGQQGAIGSP. The segment covering 1181-1193 has biased composition (pro residues); sequence PGQPGPPGPPGAP. The interval 1197–1205 is nonhelical region (C-terminal); that stretch reads CGGVGAAAI. A propeptide spans 1222 to 1466 (C-terminal propeptide); it reads DEPMDFKINT…GVDVGPVCFL (245 aa). A Fibrillar collagen NC1 domain is found at 1232–1466; the sequence is DEIMTSLKSV…GVDVGPVCFL (235 aa). 3 disulfides stabilise this stretch: Cys-1262-Cys-1294, Cys-1302-Cys-1464, and Cys-1372-Cys-1417. Asp-1280, Asn-1282, Gln-1283, Cys-1285, and Asp-1288 together coordinate Ca(2+).

This sequence belongs to the fibrillar collagen family. As to quaternary structure, trimers of identical alpha 1(III) chains. The chains are linked to each other by interchain disulfide bonds. Trimers are also cross-linked via hydroxylysines. Interacts with ADGRG1. Post-translationally, proline residues at the third position of the tripeptide repeating unit (G-X-Y) are hydroxylated in some or all of the chains. In terms of processing, O-linked glycan consists of a Glc-Gal disaccharide bound to the oxygen atom of a post-translationally added hydroxyl group.

It localises to the secreted. The protein localises to the extracellular space. The protein resides in the extracellular matrix. In terms of biological role, collagen type III occurs in most soft connective tissues along with type I collagen. Involved in regulation of cortical development. Is the major ligand of ADGRG1 in the developing brain and binding to ADGRG1 inhibits neuronal migration and activates the RhoA pathway by coupling ADGRG1 to GNA13 and possibly GNA12. The chain is Collagen alpha-1(III) chain (COL3A1) from Homo sapiens (Human).